The following is a 430-amino-acid chain: Adenylosuccinate synthetase (430 aa).

Residues 12–18 (GDEGKGK) and 40–42 (GHT) contribute to the GTP site. D13 serves as the catalytic Proton acceptor. Residues D13 and G40 each coordinate Mg(2+). IMP contacts are provided by residues 13–16 (DEGK), 38–41 (NAGH), T128, R142, Q223, T238, and R302. The active-site Proton donor is H41. 298 to 304 (TTTGRPR) is a binding site for substrate. GTP-binding positions include R304, 330–332 (SID), and 412–414 (SVG).

Belongs to the adenylosuccinate synthetase family. Homodimer. The cofactor is Mg(2+).

The protein resides in the cytoplasm. It carries out the reaction IMP + L-aspartate + GTP = N(6)-(1,2-dicarboxyethyl)-AMP + GDP + phosphate + 2 H(+). It functions in the pathway purine metabolism; AMP biosynthesis via de novo pathway; AMP from IMP: step 1/2. Plays an important role in the de novo pathway of purine nucleotide biosynthesis. Catalyzes the first committed step in the biosynthesis of AMP from IMP. The polypeptide is Adenylosuccinate synthetase (Exiguobacterium sibiricum (strain DSM 17290 / CCUG 55495 / CIP 109462 / JCM 13490 / 255-15)).